Here is a 417-residue protein sequence, read N- to C-terminus: Phosphoglycerate kinase (417 aa).

Residues valine 23, aspartate 24, phenylalanine 25, asparagine 26, glutamine 39, arginine 40, serine 63, histidine 64, glycine 66, arginine 67, leucine 122, arginine 123, histidine 170, and arginine 171 each contribute to the (2R)-3-phosphoglycerate site. An ADP-binding site is contributed by glycine 214. Glycine 214 lines the CDP pocket. Alanine 215 and lysine 216 together coordinate AMP. An ATP-binding site is contributed by alanine 215. Alanine 215 is a binding site for Mg(2+). Aspartate 219 contributes to the CDP binding site. Aspartate 219 contributes to the Mg(2+) binding site. AMP is bound at residue lysine 220. Lysine 220 is a binding site for ATP. Residue glycine 238 coordinates ADP. CDP is bound at residue glycine 238. Residues alanine 239 and glycine 313 each contribute to the AMP site. 2 residues coordinate ATP: alanine 239 and glycine 313. CDP is bound by residues glycine 338 and phenylalanine 343. Residue phenylalanine 343 coordinates ADP. Residue glutamate 344 participates in AMP binding. ATP contacts are provided by glutamate 344, aspartate 375, and threonine 376. Aspartate 375 contributes to the Mg(2+) binding site.

This sequence belongs to the phosphoglycerate kinase family. As to quaternary structure, monomer. Requires Mg(2+) as cofactor.

Its subcellular location is the cytoplasm. It is found in the mitochondrion. The catalysed reaction is (2R)-3-phosphoglycerate + ATP = (2R)-3-phospho-glyceroyl phosphate + ADP. The protein operates within carbohydrate degradation; glycolysis; pyruvate from D-glyceraldehyde 3-phosphate: step 2/5. In terms of biological role, catalyzes one of the two ATP producing reactions in the glycolytic pathway via the reversible conversion of 1,3-diphosphoglycerate to 3-phosphoglycerate. Both L- and D- forms of purine and pyrimidine nucleotides can be used as substrates, but the activity is much lower on pyrimidines. Negatively regulates the biosynthesis of acetyl-CoA from pyruvate in the mitochondrion. The protein is Phosphoglycerate kinase (pgkA) of Aspergillus oryzae (strain ATCC 42149 / RIB 40) (Yellow koji mold).